Here is a 305-residue protein sequence, read N- to C-terminus: MAKRANWSLDGQQSSGGGAASWICACTDKISIAKALTRSLSVMLSRPTALLRTGARWRVSLTASGRSTVRCASTVAGWQGGLSWPQGKQPTPYEVLGLVKTGVDARQLKKRYHELAKLYHPDTAGAAQQGLGEHERLRRFKLVNEAYALLSDASRRRMYDMYATGWAHGPAPMAPAMAHGAYHERYAYYNAGTWEDMQDLNSDRQQVQFSAWGMVVWALCMLAGFQVMAFLIRLEERTSKSAHTHEEAEHALLLAHLNYGLDQDRVSRVRRFLWFRSWGLYRTKAELDEAARTNEALVRQLEGGK.

The region spanning 91–163 (TPYEVLGLVK…SRRRMYDMYA (73 aa)) is the J domain. Residues 212–232 (WGMVVWALCMLAGFQVMAFLI) traverse the membrane as a helical segment.

Belongs to the DnaJ family.

The protein resides in the mitochondrion membrane. Its function is as follows. Probable chaperone. In Eremothecium gossypii (strain ATCC 10895 / CBS 109.51 / FGSC 9923 / NRRL Y-1056) (Yeast), this protein is J domain-containing protein 1 (JID1).